A 521-amino-acid chain; its full sequence is Bifunctional dihydrofolate reductase-thymidylate synthase (521 aa).

Residues 17-194 form the DHFR domain; sequence NYQVVVAGTR…IRHSFVSFVR (178 aa). V21 contacts substrate. Residues A23 and 29–35 contribute to the NADP(+) site; that span reads GIGKDGV. D43 contacts substrate. Residues 67 to 69 and 88 to 91 each bind NADP(+); these read RKT and LTRS. I130 provides a ligand contact to substrate. 131 to 138 serves as a coordination point for NADP(+); sequence GGGQVLRE. T151 contacts substrate. Positions 197-521 are thymidylate synthase; the sequence is KSVAETHESN…HQKIEMKMAV (325 aa). R258 contributes to the dUMP binding site. C403 is an active-site residue. DUMP is bound by residues H404, 422-426, N434, and 464-466; these read QRSAD and HVY.

In the N-terminal section; belongs to the dihydrofolate reductase family. This sequence in the C-terminal section; belongs to the thymidylate synthase family.

It catalyses the reaction (6S)-5,6,7,8-tetrahydrofolate + NADP(+) = 7,8-dihydrofolate + NADPH + H(+). The catalysed reaction is dUMP + (6R)-5,10-methylene-5,6,7,8-tetrahydrofolate = 7,8-dihydrofolate + dTMP. It functions in the pathway cofactor biosynthesis; tetrahydrofolate biosynthesis; 5,6,7,8-tetrahydrofolate from 7,8-dihydrofolate: step 1/1. In terms of biological role, bifunctional enzyme. Involved in de novo dTMP biosynthesis. Key enzyme in folate metabolism. Can play two different roles depending on the source of dihydrofolate: de novo synthesis of tetrahydrofolate or recycling of the dihydrofolate released as one of the end products of the TS catalyzed reaction. Catalyzes an essential reaction for de novo glycine and purine synthesis, DNA precursor synthesis, and for the conversion of dUMP to dTMP. This Zea mays (Maize) protein is Bifunctional dihydrofolate reductase-thymidylate synthase (DRTS).